We begin with the raw amino-acid sequence, 602 residues long: Beta-(1--&gt;2)glucan export ATP-binding/permease protein NdvA (602 aa).

One can recognise an ABC transmembrane type-1 domain in the interval Gly-21–Met-311. 6 helical membrane passes run Trp-22–Phe-42, Leu-68–Leu-88, Glu-146–Trp-166, Arg-167–Val-187, Val-254–Leu-274, and Gln-276–Ile-296. The ABC transporter domain occupies Val-345–Ala-579. Gly-378–Ser-385 contacts ATP.

It belongs to the ABC transporter superfamily. Beta-(1--&gt;2)glucan exporter (TC 3.A.1.108.1) family. Homodimer.

Its subcellular location is the cell inner membrane. It carries out the reaction [(1-&gt;2)-beta-D-glucosyl](n)(in) + ATP + H2O = [(1-&gt;2)-beta-D-glucosyl](n)(out) + ADP + phosphate + H(+). Involved in beta-(1--&gt;2)glucan export. Transmembrane domains (TMD) form a pore in the inner membrane and the ATP-binding domain (NBD) is responsible for energy generation. This Rhodopseudomonas palustris (strain BisB5) protein is Beta-(1--&gt;2)glucan export ATP-binding/permease protein NdvA.